The primary structure comprises 220 residues: Ribonuclease HII (220 aa).

One can recognise an RNase H type-2 domain in the interval 32-220 (KHIAGIDEAG…FAPIKGCFDC (189 aa)). A divalent metal cation-binding residues include Asp-38, Glu-39, and Asp-130.

The protein belongs to the RNase HII family. The cofactor is Mn(2+). Mg(2+) serves as cofactor.

The protein resides in the cytoplasm. The enzyme catalyses Endonucleolytic cleavage to 5'-phosphomonoester.. Functionally, endonuclease that specifically degrades the RNA of RNA-DNA hybrids. This chain is Ribonuclease HII, found in Brucella abortus (strain 2308).